The following is a 364-amino-acid chain: Growth hormone secretagogue receptor type 1 (364 aa).

Topologically, residues 1 to 40 are extracellular; it reads MWNATPSEEPEPNVTLDLDWDASPGNDSLPDELLPLFPAP. Asn13 and Asn26 each carry an N-linked (GlcNAc...) asparagine glycan. Residues 41–66 traverse the membrane as a helical segment; the sequence is LLAGVTATCVALFVVGISGNLLTMLV. The Cytoplasmic segment spans residues 67-72; that stretch reads VSRFRE. The chain crosses the membrane as a helical span at residues 73 to 96; that stretch reads LRTTTNLYLSSMAFSDLLIFLCMP. Over 97–117 the chain is Extracellular; sequence LDLVRLWQYRPWNFGDLLCKL. The cysteines at positions 115 and 197 are disulfide-linked. The helical transmembrane segment at 118 to 139 threads the bilayer; it reads FQFVSESCTYATVLTITALSVE. The Cytoplasmic portion of the chain corresponds to 140-162; it reads RYFAICFPLRAKVVVTKGRVKLV. The helical transmembrane segment at 163-183 threads the bilayer; that stretch reads ILVIWAVAFCSAGPIFVLVGV. Over 184-211 the chain is Extracellular; the sequence is EHENGTDPRDTNECRATEFAVRSGLLTV. N-linked (GlcNAc...) asparagine glycosylation is present at Asn187. A helical transmembrane segment spans residues 212–235; sequence MVWVSSVFFFLPVFCLTVLYSLIG. At 236 to 263 the chain is on the cytoplasmic side; that stretch reads RKLWRRRGDAAVGASLRDQNHKQTVKML. A helical membrane pass occupies residues 264 to 285; the sequence is AVVVFAFILCWLPFHVGRYLFS. Over 286–302 the chain is Extracellular; the sequence is KSFEPGSLEIAQISQYC. The chain crosses the membrane as a helical span at residues 303 to 326; that stretch reads NLVSFVLFYLSAAINPILYNIMSK. The Cytoplasmic portion of the chain corresponds to 327–364; the sequence is KYRVAVFKLLGFESFSQRKLSTLKDESSRAWTKSSINT.

Belongs to the G-protein coupled receptor 1 family.

The protein localises to the cell membrane. Receptor for ghrelin, coupled to G-alpha-11 proteins. Stimulates growth hormone secretion. Also binds other growth hormone releasing peptides (GHRP) (e.g. Met-enkephalin and GHRP-6) as well as non-peptide, low molecular weight secretagogues (e.g. L-692,429, MK-0677, adenosine). This Rattus norvegicus (Rat) protein is Growth hormone secretagogue receptor type 1 (Ghsr).